The primary structure comprises 397 residues: Argininosuccinate synthase (397 aa).

8-16 lines the ATP pocket; that stretch reads AYSGGLDTS. L-citrulline is bound at residue Tyr87. Gly117 is an ATP binding site. Positions 119, 123, and 124 each coordinate L-aspartate. Asn123 provides a ligand contact to L-citrulline. The L-citrulline site is built by Arg127, Ser175, Glu259, and Tyr271.

Belongs to the argininosuccinate synthase family. Type 1 subfamily. As to quaternary structure, homotetramer.

The protein localises to the cytoplasm. It carries out the reaction L-citrulline + L-aspartate + ATP = 2-(N(omega)-L-arginino)succinate + AMP + diphosphate + H(+). It functions in the pathway amino-acid biosynthesis; L-arginine biosynthesis; L-arginine from L-ornithine and carbamoyl phosphate: step 2/3. In Streptomyces clavuligerus, this protein is Argininosuccinate synthase.